We begin with the raw amino-acid sequence, 281 residues long: Protein EMBRYO DEFECTIVE 1674 (281 aa).

Composition is skewed to polar residues over residues 1-14 and 24-41; these read MTTT…QSLS and PNTS…PNSS. The interval 1–47 is disordered; sequence MTTTRAKSKFQSLSACRFTPLPEPNTSPSTYSKTLPKPNSSPGTDGT. The region spanning 66–153 is the SANTA domain; sequence VTLSDWWLTK…LGFPYDWEDY (88 aa).

Functionally, required for normal embryo development. In Arabidopsis thaliana (Mouse-ear cress), this protein is Protein EMBRYO DEFECTIVE 1674.